Reading from the N-terminus, the 305-residue chain is GMP synthase [glutamine-hydrolyzing] subunit B (305 aa).

One can recognise a GMPS ATP-PPase domain in the interval 2–185 (VNVDEFIEEA…LDLEEIISER (184 aa)). Position 29-35 (29-35 (SGGVDSS)) interacts with ATP.

Heterodimer composed of a glutamine amidotransferase subunit (A) and a GMP-binding subunit (B).

The enzyme catalyses XMP + L-glutamine + ATP + H2O = GMP + L-glutamate + AMP + diphosphate + 2 H(+). The protein operates within purine metabolism; GMP biosynthesis; GMP from XMP (L-Gln route): step 1/1. Its function is as follows. Catalyzes the synthesis of GMP from XMP. The chain is GMP synthase [glutamine-hydrolyzing] subunit B from Haloarcula marismortui (strain ATCC 43049 / DSM 3752 / JCM 8966 / VKM B-1809) (Halobacterium marismortui).